The primary structure comprises 966 residues: MTDTTLLDLLSDSKEFATRHNGSGAAQQKKMLETIGVQSIEQLIDQTVPAAIRLPEKMKLAEPQSESMTLASLKAIAEKNIVNRSFIGQGYYNTLLPNVILRNVLENPGWYTAYTPYQPEISQGRLESLLNYQQMVMDLTAMEIANASLLDEATAAAESMTLCKRAGKSKSLAFFVADGIHPQTVDVVRTRAEFFGYEIISGSMEDLDNHDLFGALLQYPSTTGNIQDLTAIIEKAHAKKTLVSVASDLLALTLLKAPGEMGADIVIGSAQRFGIPMGFGGPHAGFMATKEKFKRTMPGRIIGVSKDSKGKPALRMAMQTREQHIRREKATSNICTAQALLANMSAFYALYHGPEGLRKIARRVHHLTAILVAGLRSEGFELANQHFFDTITLNSNEHSKAIYHRALAEGMNLRKFPTPDNMPVQLGISLDETTTITDVEDLLRVITGKALSSAGFAAQVAEDEFAGIPATCRRRSKYLTHPIFNEHHSETQMMRYMKKLENKDYSLTHGMIPLGCCTMKLNAAALMLPVSWPEFSQMHPFAPTEQSFGYQELAEKLSKMLCEVTGYDGFSLQPNSGAQGEYAGLIAIHRYHQSNGEDQRNICLIPSSAHGTNPATASMLSMKVVVVGCDQQGNIDHADLKAKIDKHRDNLSCIMVTYPSTHGIYEEGIQEICEWVHEAGGQVYLDGANMNAQIGLTSPGFIGSDVSHLNLHKTFCIPHGGGGPGMGPIGVKKHLIPFLPGHIEVTESADNKHYAVSAAELGSASILPISYAYIAMMGEQGLTSATQIAILNANYIMERLRPHYPILYQGKEGRVAHECIIDIRPLEAASGISNEDIAKRLMDYGFHAPTMSFPVGGTFMIEPTESESTAELDRFCDAMIAIRHEIKQIEDGEWSATDNPLVNAPHTQVDLMESEWTHGYSRELACFPSKHSKDSKYWPTVNRVDNVFGDRNLICSCPSIESYMEE.

K713 carries the N6-(pyridoxal phosphate)lysine modification.

This sequence belongs to the GcvP family. In terms of assembly, the glycine cleavage system is composed of four proteins: P, T, L and H. Pyridoxal 5'-phosphate is required as a cofactor.

The catalysed reaction is N(6)-[(R)-lipoyl]-L-lysyl-[glycine-cleavage complex H protein] + glycine + H(+) = N(6)-[(R)-S(8)-aminomethyldihydrolipoyl]-L-lysyl-[glycine-cleavage complex H protein] + CO2. The glycine cleavage system catalyzes the degradation of glycine. The P protein binds the alpha-amino group of glycine through its pyridoxal phosphate cofactor; CO(2) is released and the remaining methylamine moiety is then transferred to the lipoamide cofactor of the H protein. This chain is Glycine dehydrogenase (decarboxylating), found in Psychromonas ingrahamii (strain DSM 17664 / CCUG 51855 / 37).